The sequence spans 167 residues: Seroin (167 aa).

The signal sequence occupies residues 1 to 17 (MATKILIFLSFVALSSA). Asparagine 26 carries N-linked (GlcNAc...) asparagine glycosylation. 5 tandem repeats follow at residues 38 to 46 (PPLPQPPPL), 56 to 64 (PPLPQPPPL), 76 to 78 (PPI), 79 to 81 (PPI), and 82 to 84 (PPI). The tract at residues 145–167 (VNETIVGDNPPKFEESRKESSSN) is disordered. The N-linked (GlcNAc...) asparagine glycan is linked to asparagine 146. A compositionally biased stretch (basic and acidic residues) spans 155–167 (PKFEESRKESSSN).

As to expression, produced by both the posterior (PSG) and middle (MSG) sections of silk glands.

The protein resides in the secreted. The protein is Seroin of Galleria mellonella (Greater wax moth).